A 747-amino-acid polypeptide reads, in one-letter code: DNA damage checkpoint protein LCD1 (747 aa).

Phosphoserine occurs at positions 10, 11, and 76. Residues 62–139 are a coiled coil; sequence NQLVNQLNKA…MEARGKSKRE (78 aa). The segment at 145 to 180 is disordered; it reads KPPSTTLSTNTNTITPDSSSVAIEAKPQSPQSKKRK. Over residues 146–160 the composition is skewed to low complexity; that stretch reads PPSTTLSTNTNTITP.

As to quaternary structure, forms a complex with MEC1. Post-translationally, phosphorylated by MEC1 in a cell cycle dependent manner and in response to DNA damage.

The protein resides in the cytoplasm. The protein localises to the nucleus. In terms of biological role, forms a complex with the serine/threonine kinase MEC1 which activates checkpoint signaling upon genotoxic stresses. The MEC1-LCD1 complex is recruited by the single-strand-binding protein complex RPA to DNA lesions in order to initiate the DNA repair by homologous recombination, after the MRX-complex and TEL1 are displaced. Required for the recruitment of MEC1 to DNA lesions, the activation of CHK1 and RAD53 kinases and phosphorylation of RAD9 in response to DNA damage. Required for cell growth and meiotic recombination. This is DNA damage checkpoint protein LCD1 (LCD1) from Saccharomyces cerevisiae (strain ATCC 204508 / S288c) (Baker's yeast).